The primary structure comprises 156 residues: Large ribosomal subunit protein eL29 (156 aa).

Basic residues predominate over residues 1-26 (MAKSKNHTTHNQSRKWHRNGIKKPRS). Disordered regions lie at residues 1 to 35 (MAKS…LKGV) and 116 to 156 (RRLC…VKAP). Position 5 is an N6-methyllysine (Lys5). Ser31 bears the Phosphoserine mark. Lys33 bears the N6-acetyllysine mark. A run of 2 repeats spans residues 129–136 (AEAKAPAK) and 137–144 (AQAKAPAQ). The tract at residues 129 to 144 (AEAKAPAKAQAKAPAQ) is 2 X 8 AA tandem repeats of A-X-A-K-A-P-A-[KQ]. Residues 134–156 (PAKAQAKAPAQAPKGAQAPVKAP) are compositionally biased toward low complexity.

Belongs to the eukaryotic ribosomal protein eL29 family. Component of the large ribosomal subunit.

The protein localises to the cytoplasm. Its function is as follows. Component of the large ribosomal subunit. The ribosome is a large ribonucleoprotein complex responsible for the synthesis of proteins in the cell. In Rattus norvegicus (Rat), this protein is Large ribosomal subunit protein eL29 (Rpl29).